The following is a 276-amino-acid chain: Pyrroline-5-carboxylate reductase (276 aa).

It belongs to the pyrroline-5-carboxylate reductase family.

The protein localises to the cytoplasm. It carries out the reaction L-proline + NADP(+) = (S)-1-pyrroline-5-carboxylate + NADPH + 2 H(+). It catalyses the reaction L-proline + NAD(+) = (S)-1-pyrroline-5-carboxylate + NADH + 2 H(+). It participates in amino-acid biosynthesis; L-proline biosynthesis; L-proline from L-glutamate 5-semialdehyde: step 1/1. The protein is Pyrroline-5-carboxylate reductase (PROC1) of Arabidopsis thaliana (Mouse-ear cress).